Reading from the N-terminus, the 568-residue chain is Sentrin-specific protease 3 (568 aa).

The segment at 1–119 (MKETIQGTGS…PSHRKTCSQR (119 aa)) is disordered. Serine 52, serine 71, and serine 73 each carry phosphoserine. Residues 72 to 87 (ASEEEEEEEEEDEEEV) show a composition bias toward acidic residues. Basic residues predominate over residues 106–119 (RALRPSHRKTCSQR). 2 short sequence motifs (nuclear localization signal) span residues 119–122 (RRRR) and 147–153 (RHRGRRR). A disordered region spans residues 155 to 174 (LAHPKNHLSPQEGGATPQVP). Serine 163 is subject to Phosphoserine. Threonine 170 carries the post-translational modification Phosphothreonine. Phosphoserine occurs at positions 175, 182, 206, and 226. A protease region spans residues 380–537 (HVLTMDDLGT…AFVLQYCKHL (158 aa)). Active-site residues include histidine 459 and aspartate 476. Residue cysteine 526 is the Nucleophile of the active site.

It belongs to the peptidase C48 family. Component of some MLL1/MLL complex, at least composed of the core components KMT2A/MLL1, ASH2L, HCFC1/HCF1, WDR5 and RBBP5, as well as the facultative components BACC1, CHD8, E2F6, HSP70, INO80C, KANSL1, LAS1L, MAX, MCRS1, MGA, MYST1/MOF, PELP1, PHF20, PRP31, RING2, RUVB1/TIP49A, RUVB2/TIP49B, SENP3, TAF1, TAF4, TAF6, TAF7, TAF9 and TEX10. Interacts with EP300, NPM1 and CDCA8. Component of the 5FMC complex, at least composed of PELP1, LAS1L, TEX10, WDR18 and SENP3; the complex interacts with methylated CHTOP and ZNF148. Interacts with NOL9. Interacts with CCAR2.

It is found in the nucleus. The protein localises to the nucleolus. It localises to the nucleoplasm. The protein resides in the cytoplasm. On oxidative stress, SENP3 degradation is blocked by inhibition of its ubiquitination, which stabilizes it as it accumulates in the nucleoplasm. Functionally, protease that releases SUMO2 and SUMO3 monomers from sumoylated substrates, but has only weak activity against SUMO1 conjugates. Deconjugates SUMO2 from MEF2D, which increases its transcriptional activation capability. Deconjugates SUMO2 and SUMO3 from CDCA8. Redox sensor that, when redistributed into nucleoplasm, can act as an effector to enhance HIF1A transcriptional activity by desumoylating EP300. Required for rRNA processing through deconjugation of SUMO2 and SUMO3 from nucleophosmin, NPM1. Plays a role in the regulation of sumoylation status of ZNF148. Functions as a component of the Five Friends of Methylated CHTOP (5FMC) complex; the 5FMC complex is recruited to ZNF148 by methylated CHTOP, leading to desumoylation of ZNF148 and subsequent transactivation of ZNF148 target genes. Deconjugates SUMO2 from KAT5. Catalyzes desumoylation of MRE11. In Mus musculus (Mouse), this protein is Sentrin-specific protease 3 (Senp3).